We begin with the raw amino-acid sequence, 790 residues long: Nuclear cap-binding protein subunit 1 (790 aa).

The disordered stretch occupies residues 1-26 (MSRRRHSYENDGGQPHKRRKTSDANE). The short motif at 3–20 (RRRHSYENDGGQPHKRRK) is the Nuclear localization signal element. S7 carries the post-translational modification Phosphoserine. At T21 the chain carries Phosphothreonine. Phosphoserine occurs at positions 22 and 201. Residues 28–240 (EDHLESLICK…CLWAQIQKLK (213 aa)) enclose the MIF4G domain. K204 carries the post-translational modification N6-acetyllysine. Residues 643-713 (STIRKMNKHV…SEQKNLFLVI (71 aa)) adopt a coiled-coil conformation. K684 is covalently cross-linked (Glycyl lysine isopeptide (Lys-Gly) (interchain with G-Cter in SUMO2)). K698 carries the N6-acetyllysine modification.

Belongs to the NCBP1 family. In terms of assembly, component of the nuclear cap-binding complex (CBC), a heterodimer composed of NCBP1/CBP80 and NCBP2/CBP20 that interacts with m7GpppG-capped RNA. Found in a U snRNA export complex containing PHAX/RNUXA, NCBP1/CBP80, NCBP2/CBP20, RAN, XPO1 and m7G-capped RNA. Identified in a IGF2BP1-dependent mRNP granule complex containing untranslated mRNAs. Interacts with PHAX/RNUXA, SRRT/ARS2, EIF4G2, IGF2BP1, HNRNPF, HNRNPH1, KIAA0427/CTIF, PARN, DROSHA, UPF1 and ALYREF/THOC4. May interact with EIF4G1; the interaction is however controversial since it is reported by, and, but is not observed by. The large PER complex involved in the repression of transcriptional termination is composed of at least PER2, CDK9, DDX5, DHX9, NCBP1/CBP80 and POLR2A. Component of an alternative nuclear cap-binding complex (CBC) composed of NCBP1/CBP80 and NCBP3. Interacts with METTL3. Interacts with ZFC3H1 in a RNase-insensitive manner. Interacts with MTREX. Interacts with TASOR. Interacts with DHX34; the interaction is RNA-dependent. Interacts with KPNA3. In terms of processing, dephosphorylated at Thr-21 by the PNUTS-PP1 complex during RNA polymerase II transcription pause-release.

Its subcellular location is the nucleus. It localises to the cytoplasm. Its function is as follows. Component of the cap-binding complex (CBC), which binds cotranscriptionally to the 5'-cap of pre-mRNAs and is involved in various processes such as pre-mRNA splicing, translation regulation, nonsense-mediated mRNA decay, RNA-mediated gene silencing (RNAi) by microRNAs (miRNAs) and mRNA export. The CBC complex is involved in mRNA export from the nucleus via its interaction with ALYREF/THOC4/ALY, leading to the recruitment of the mRNA export machinery to the 5'-end of mRNA and to mRNA export in a 5' to 3' direction through the nuclear pore. The CBC complex is also involved in mediating U snRNA and intronless mRNAs export from the nucleus. The CBC complex is essential for a pioneer round of mRNA translation, before steady state translation when the CBC complex is replaced by cytoplasmic cap-binding protein eIF4E. The pioneer round of mRNA translation mediated by the CBC complex plays a central role in nonsense-mediated mRNA decay (NMD), NMD only taking place in mRNAs bound to the CBC complex, but not on eIF4E-bound mRNAs. The CBC complex enhances NMD in mRNAs containing at least one exon-junction complex (EJC) via its interaction with UPF1, promoting the interaction between UPF1 and UPF2. The CBC complex is also involved in 'failsafe' NMD, which is independent of the EJC complex, while it does not participate in Staufen-mediated mRNA decay (SMD). During cell proliferation, the CBC complex is also involved in microRNAs (miRNAs) biogenesis via its interaction with SRRT/ARS2 and is required for miRNA-mediated RNA interference. The CBC complex also acts as a negative regulator of PARN, thereby acting as an inhibitor of mRNA deadenylation. In the CBC complex, NCBP1/CBP80 does not bind directly capped RNAs (m7GpppG-capped RNA) but is required to stabilize the movement of the N-terminal loop of NCBP2/CBP20 and lock the CBC into a high affinity cap-binding state with the cap structure. Associates with NCBP3 to form an alternative cap-binding complex (CBC) which plays a key role in mRNA export and is particularly important in cellular stress situations such as virus infections. The conventional CBC with NCBP2 binds both small nuclear RNA (snRNA) and messenger (mRNA) and is involved in their export from the nucleus whereas the alternative CBC with NCBP3 does not bind snRNA and associates only with mRNA thereby playing a role only in mRNA export. NCBP1/CBP80 is required for cell growth and viability. The chain is Nuclear cap-binding protein subunit 1 (Ncbp1) from Rattus norvegicus (Rat).